A 260-amino-acid chain; its full sequence is HLA class II histocompatibility antigen, DP alpha 1 chain (260 aa).

The N-terminal stretch at 1-28 is a signal peptide; that stretch reads MRPEDRMFHIRAVILRALSLAFLLSLRG. The alpha-1 stretch occupies residues 29 to 115; that stretch reads AGAIKADHVS…QRSNHTQATN (87 aa). Residues 29 to 222 are Extracellular-facing; the sequence is AGAIKADHVS…EPIQMPETTE (194 aa). Residues Asn-109 and Asn-149 are each glycosylated (N-linked (GlcNAc...) asparagine). The interval 116 to 209 is alpha-2; that stretch reads DPPEVTVFPK…GLDQPLLKHW (94 aa). The region spanning 118–210 is the Ig-like C1-type domain; it reads PEVTVFPKEP…LDQPLLKHWE (93 aa). Cys-138 and Cys-194 are disulfide-bonded. The tract at residues 210 to 222 is connecting peptide; it reads EAQEPIQMPETTE. The chain crosses the membrane as a helical span at residues 223-245; sequence TVLCALGLVLGLVGIIVGTVLII. Over 246–260 the chain is Cytoplasmic; it reads KSLRSGHDPRAQGTL.

Belongs to the MHC class II family. In terms of assembly, heterodimer of an alpha and a beta subunit; also referred as MHC class II molecule. In the endoplasmic reticulum (ER) it forms a heterononamer; 3 MHC class II molecules bind to a CD74 homotrimer (also known as invariant chain or HLA class II histocompatibility antigen gamma chain). In the endosomal/lysosomal system; CD74 undergoes sequential degradation by various proteases; leaving a small fragment termed CLIP on each MHC class II molecule. MHC class II molecule interacts with HLA_DM, and HLA_DO in B-cells, in order to release CLIP and facilitate the binding of antigenic peptides.

The protein localises to the cell membrane. Its subcellular location is the endoplasmic reticulum membrane. It is found in the golgi apparatus. The protein resides in the trans-Golgi network membrane. It localises to the endosome membrane. The protein localises to the lysosome membrane. Its function is as follows. Binds peptides derived from antigens that access the endocytic route of antigen presenting cells (APC) and presents them on the cell surface for recognition by the CD4 T-cells. The peptide binding cleft accommodates peptides of 10-30 residues. The peptides presented by MHC class II molecules are generated mostly by degradation of proteins that access the endocytic route, where they are processed by lysosomal proteases and other hydrolases. Exogenous antigens that have been endocytosed by the APC are thus readily available for presentation via MHC II molecules, and for this reason this antigen presentation pathway is usually referred to as exogenous. As membrane proteins on their way to degradation in lysosomes as part of their normal turn-over are also contained in the endosomal/lysosomal compartments, exogenous antigens must compete with those derived from endogenous components. Autophagy is also a source of endogenous peptides, autophagosomes constitutively fuse with MHC class II loading compartments. In addition to APCs, other cells of the gastrointestinal tract, such as epithelial cells, express MHC class II molecules and CD74 and act as APCs, which is an unusual trait of the GI tract. To produce a MHC class II molecule that presents an antigen, three MHC class II molecules (heterodimers of an alpha and a beta chain) associate with a CD74 trimer in the ER to form a heterononamer. Soon after the entry of this complex into the endosomal/lysosomal system where antigen processing occurs, CD74 undergoes a sequential degradation by various proteases, including CTSS and CTSL, leaving a small fragment termed CLIP (class-II-associated invariant chain peptide). The removal of CLIP is facilitated by HLA-DM via direct binding to the alpha-beta-CLIP complex so that CLIP is released. HLA-DM stabilizes MHC class II molecules until primary high affinity antigenic peptides are bound. The MHC II molecule bound to a peptide is then transported to the cell membrane surface. In B-cells, the interaction between HLA-DM and MHC class II molecules is regulated by HLA-DO. Primary dendritic cells (DCs) also to express HLA-DO. Lysosomal microenvironment has been implicated in the regulation of antigen loading into MHC II molecules, increased acidification produces increased proteolysis and efficient peptide loading. The chain is HLA class II histocompatibility antigen, DP alpha 1 chain (HLA-DPA1) from Homo sapiens (Human).